The primary structure comprises 195 residues: CDP-diacylglycerol--glycerol-3-phosphate 3-phosphatidyltransferase (195 aa).

Transmembrane regions (helical) follow at residues 7 to 24 (ITVLRVLLIPIFILLFYL), 60 to 81 (FGAFLDPVADKLMVAVALVLLV), 134 to 150 (MLALVILLANPPAFTFW), and 157 to 173 (FLLIAGGLTLWSMLQYL).

Belongs to the CDP-alcohol phosphatidyltransferase class-I family.

Its subcellular location is the cell membrane. The enzyme catalyses a CDP-1,2-diacyl-sn-glycerol + sn-glycerol 3-phosphate = a 1,2-diacyl-sn-glycero-3-phospho-(1'-sn-glycero-3'-phosphate) + CMP + H(+). It participates in phospholipid metabolism; phosphatidylglycerol biosynthesis; phosphatidylglycerol from CDP-diacylglycerol: step 1/2. Functionally, this protein catalyzes the committed step to the synthesis of the acidic phospholipids. The protein is CDP-diacylglycerol--glycerol-3-phosphate 3-phosphatidyltransferase (pgsA) of Pseudomonas fluorescens.